The following is a 394-amino-acid chain: Ceramide glucosyltransferase (394 aa).

At 1 to 10 (MALLDLAQEG) the chain is on the lumenal side. Residues 11 to 32 (MALFGFVLFVVLWLMHFMSIIY) form a helical membrane-spanning segment. At 33-195 (TRLHLNKKAT…QVYFGTSHPR (163 aa)) the chain is on the cytoplasmic side. Position 92 (Asp92) is a short sequence motif, D1. At Lys117 the chain carries N6-acetyllysine. A short sequence motif (D2) is located at residue Asp144. A helical transmembrane segment spans residues 196-215 (SYISANVTGFKCVTGMSCLM). Topologically, residues 216 to 287 (RKDVLDQAGG…KLRINMLPAT (72 aa)) are lumenal. Asp236 is a short sequence motif (D3). Asp236 acts as the Proton acceptor in catalysis. A (Q/R)XXRW motif is present at residues 272-276 (RMIRW). Residues 288 to 304 (IICEPISECFVASLIIG) traverse the membrane as a helical segment. Over 305 to 309 (WAAHH) the chain is Cytoplasmic. The helical transmembrane segment at 310–328 (VFRWDIMVFFMCHCLAWFI) threads the bilayer. Topologically, residues 329–348 (FDYIQLRGVQGGTLCFSKLD) are lumenal. The helical transmembrane segment at 349–369 (YAVAWFIRESMTIYIFLSALW) threads the bilayer. Over 370-394 (DPTISWRTGRYRLRCGGTAEEILDV) the chain is Cytoplasmic.

The protein belongs to the glycosyltransferase 2 family. As to quaternary structure, interacts with RTN1; regulates the ceramide glucosyltransferase activity of UGCG.

It localises to the golgi apparatus membrane. It carries out the reaction an N-acylsphing-4-enine + UDP-alpha-D-glucose = a beta-D-glucosyl-(1&lt;-&gt;1')-N-acylsphing-4-enine + UDP + H(+). It catalyses the reaction UDP-alpha-D-xylose + an N-acylsphing-4-enine = a beta-D-xylosyl-(1&lt;-&gt;1')-N-acylsphing-4-enine + UDP + H(+). The catalysed reaction is N-(9Z-octadecenoyl)-sphing-4-enine + UDP-alpha-D-xylose = beta-D-xylosyl-(1&lt;-&gt;1')-N-(9Z-octadecenoyl)-sphing-4-enine + UDP + H(+). It participates in lipid metabolism; sphingolipid metabolism. Participates in the initial step of the glucosylceramide-based glycosphingolipid/GSL synthetic pathway at the cytosolic surface of the Golgi. Catalyzes the transfer of glucose from UDP-glucose to ceramide to produce glucosylceramide/GlcCer (such as beta-D-glucosyl-(1&lt;-&gt;1')-N-acylsphing-4-enine). Glucosylceramide is the core component of glycosphingolipids/GSLs, amphipathic molecules consisting of a ceramide lipid moiety embedded in the outer leaflet of the membrane, linked to one of hundreds of different externally oriented oligosaccharide structures. Glycosphingolipids are essential components of membrane microdomains that mediate membrane trafficking and signal transduction. They are implicated in many fundamental cellular processes, including growth, differentiation, migration, morphogenesis, cell-to-cell and cell-to-matrix interactions. They are required for instance in the proper development and functioning of the nervous system. As an example of their role in signal transduction, they regulate the leptin receptor/LEPR in the leptin-mediated signaling pathway. They also play an important role in the establishment of the skin barrier regulating keratinocyte differentiation and the proper assembly of the cornified envelope. The biosynthesis of GSLs is also required for the proper intestinal endocytic uptake of nutritional lipids. Catalyzes the synthesis of xylosylceramide/XylCer (such as beta-D-xylosyl-(1&lt;-&gt;1')-N-acylsphing-4-enine) using UDP-Xyl as xylose donor. This is Ceramide glucosyltransferase from Mus musculus (Mouse).